Consider the following 118-residue polypeptide: Protein MGF 110-6L (118 aa).

The first 18 residues, 1 to 18, serve as a signal peptide directing secretion; sequence MLVIFLGILGLLASQVSS. N-linked (GlcNAc...) asparagine; by host glycosylation is present at Asn96. The short motif at 115 to 118 is the Prevents secretion from ER element; the sequence is KDEL.

The protein belongs to the asfivirus MGF 110 family. N-glycosylated.

Its subcellular location is the host endoplasmic reticulum lumen. Plays a role in virus cell tropism, and may be required for efficient virus replication in macrophages. The polypeptide is Protein MGF 110-6L (African swine fever virus (strain Badajoz 1971 Vero-adapted) (Ba71V)).